Reading from the N-terminus, the 415-residue chain is Histone acetyltransferase type B subunit 2 (415 aa).

WD repeat units follow at residues 118–158 (ENNF…KTAI), 163–203 (PHED…ATDL), 211–251 (THKD…EPVS), 256–296 (PESE…TKSA), and 307–347 (GHSD…EEQA). The interval 349 to 353 (EDAED) is interaction with the histone H4 N-terminus. The WD 6 repeat unit spans residues 364–404 (GHTGAVTDLSWCPYKDWTIGSVADDNIVHLWEIGKTLLNAE).

It belongs to the WD repeat RBAP46/RBAP48/MSI1 family. As to quaternary structure, component of the HAT-B complex composed of at least HAT1 and HAT2. The HAT-B complex binds to histone H4 tail.

It is found in the cytoplasm. The protein localises to the nucleus. Regulatory subunit of the histone acetylase B (HAT-B) complex. The complex acetylates 'Lys-12' of histone H4 which is required for telomeric silencing. The protein is Histone acetyltransferase type B subunit 2 (HAT2) of Debaryomyces hansenii (strain ATCC 36239 / CBS 767 / BCRC 21394 / JCM 1990 / NBRC 0083 / IGC 2968) (Yeast).